A 179-amino-acid chain; its full sequence is MSSRVLTPDVVGIDALVHDHQTVLAKAEGGVVAVFDNNAPAFYAVTPARLAELLALEEKLARPGSDVALDDQLYQEPQTAPVAVPMGKFAMYPDWQPDADFIRLAALWGVALREPVTAEELASFIAYWQAEGKVFHHVQWQQKLARSLQIGRASNGGLPKRDVNTVSEPDSQIPPGFRG.

Residues 156–179 (GGLPKRDVNTVSEPDSQIPPGFRG) form a disordered region.

This sequence belongs to the DnaT family. In terms of assembly, homooligomerizes. Interacts with PriB. Component of the replication restart primosome. Primosome assembly occurs via a 'hand-off' mechanism. PriA binds to replication forks, subsequently PriB then DnaT bind; DnaT then displaces ssDNA to generate the helicase loading substrate.

In terms of biological role, involved in the restart of stalled replication forks, which reloads the replicative helicase on sites other than the origin of replication. Can function in multiple replication restart pathways. Displaces ssDNA from a PriB-ssDNA complex. Probably forms a spiral filament on ssDNA. This Escherichia coli O81 (strain ED1a) protein is Replication restart protein DnaT.